Reading from the N-terminus, the 112-residue chain is Protein FAM32A (112 aa).

The segment at 23 to 56 is disordered; it reads TKRKKKKKDKDKAKMLEAMGTSKKNEEEKRRCLD. Residues 45–56 are compositionally biased toward basic and acidic residues; it reads KKNEEEKRRCLD.

Belongs to the FAM32 family.

Its subcellular location is the nucleus. Its function is as follows. May induce G2 arrest and apoptosis. May also increase cell sensitivity to apoptotic stimuli. This is Protein FAM32A (Fam32a) from Rattus norvegicus (Rat).